We begin with the raw amino-acid sequence, 381 residues long: Ribosomal lysine N-methyltransferase set11 (381 aa).

The SET domain maps to 23-224; it reads PSLEFSVIPD…KGEQIFLCYG (202 aa). S-adenosyl-L-methionine is bound at residue Y223.

It belongs to the class V-like SAM-binding methyltransferase superfamily. RKM2 family.

The protein localises to the cytoplasm. It localises to the nucleus. It is found in the nucleolus. S-adenosyl-L-methionine-dependent protein-lysine N-methyltransferase that trimethylates 60S ribosomal protein L12 (rpl1201 and rpl1202) at 'Lys-4' and may dimethylate L12 also at 'Lys-40' and 'Lys-41'. Overexpression causes a severe growth defect. Has a role in meiosis. The protein is Ribosomal lysine N-methyltransferase set11 (set11) of Schizosaccharomyces pombe (strain 972 / ATCC 24843) (Fission yeast).